Reading from the N-terminus, the 307-residue chain is Aspartate carbamoyltransferase catalytic subunit (307 aa).

Carbamoyl phosphate contacts are provided by Arg-59 and Thr-60. Lys-87 contacts L-aspartate. Carbamoyl phosphate is bound by residues Arg-109, His-137, and Gln-140. The L-aspartate site is built by Arg-173 and Arg-223. Residues Gly-266 and Pro-267 each contribute to the carbamoyl phosphate site.

This sequence belongs to the aspartate/ornithine carbamoyltransferase superfamily. ATCase family. Heterododecamer (2C3:3R2) of six catalytic PyrB chains organized as two trimers (C3), and six regulatory PyrI chains organized as three dimers (R2).

The enzyme catalyses carbamoyl phosphate + L-aspartate = N-carbamoyl-L-aspartate + phosphate + H(+). Its pathway is pyrimidine metabolism; UMP biosynthesis via de novo pathway; (S)-dihydroorotate from bicarbonate: step 2/3. In terms of biological role, catalyzes the condensation of carbamoyl phosphate and aspartate to form carbamoyl aspartate and inorganic phosphate, the committed step in the de novo pyrimidine nucleotide biosynthesis pathway. This is Aspartate carbamoyltransferase catalytic subunit from Helicobacter pylori (strain HPAG1).